The chain runs to 99 residues: Monothiol glutaredoxin-S11 (99 aa).

The 99-residue stretch at 1–99 folds into the Glutaredoxin domain; that stretch reads MDKVMRMSSE…LVPLVKPYLC (99 aa). Cys21 provides a ligand contact to [2Fe-2S] cluster.

The protein belongs to the glutaredoxin family. CC-type subfamily.

The protein localises to the cytoplasm. Its function is as follows. May only reduce GSH-thiol disulfides, but not protein disulfides. The protein is Monothiol glutaredoxin-S11 (GRXS11) of Arabidopsis thaliana (Mouse-ear cress).